Reading from the N-terminus, the 1577-residue chain is Dynamin-binding protein (1577 aa).

Met-1 bears the N-acetylmethionine mark. SH3 domains follow at residues 2 to 61 (EAGS…IVTI), 66 to 126 (EGER…ELCL), 145 to 204 (YSMG…LLGP), and 243 to 302 (EPGT…LCPD). Disordered regions lie at residues 211 to 244 (SVSSGNQDDCIVNGEVDTPVGEEEIGPDEDEEEP) and 335 to 395 (EEQR…WEMP). Residues 230–244 (VGEEEIGPDEDEEEP) show a composition bias toward acidic residues. The span at 335 to 344 (EEQRHETSDH) shows a compositional bias: basic and acidic residues. Residue Ser-496 is modified to Phosphoserine. Disordered stretches follow at residues 591–624 (GSSKLITEQELPERRKALRPPPPRPCTPVSTSPH) and 639–659 (VRPSRPAPLPPSAQQRTNAVS). Residues 639-649 (VRPSRPAPLPP) are compositionally biased toward pro residues. Ser-684 is subject to Phosphoserine. Positions 693–757 (LVLVRIEEME…ELQQLREMTL (65 aa)) form a coiled coil. The DH domain occupies 784 to 967 (KRAKVIEELL…KEINVNINEY (184 aa)). The BAR domain maps to 1008-1217 (LKHLTGFAPQ…LKVAGREGNL (210 aa)). Positions 1136 to 1173 (ERAEKLKDKKTLEELQSARNNYEALNAQLLDELPKFHQ) form a coiled coil. The region spanning 1285-1348 (PPEKLFQAER…YSSFLKPYNP (64 aa)) is the SH3 5 domain. The segment at 1348-1487 (PRRSHSDASV…SVPGRNGQSQ (140 aa)) is disordered. Residues 1376-1405 (RQNSGSTLTFNPSSMAVSFTSGSCQKQPQD) are compositionally biased toward polar residues. The segment covering 1419-1442 (SASLNPSNSESSPSRCPSDPDSTS) has biased composition (low complexity). In terms of domain architecture, SH3 6 spans 1513–1576 (EGNQVYFAVY…PSNYIRKTEY (64 aa)).

As to quaternary structure, binds DNM1 via its N-terminal SH3 domains. The C-terminal SH3 domain binds a complex containing actin, tubulin, Hsp70 and actin-regulatory proteins, such as ENAH, EVL, WIRE, CR16, WAVE1 and NAP1L1. Interacts with FASLG. Interacts (via SH3 domain 6) with WASL. Interacts (via SH3 domain 6) interacts with ENAH. Interacts (via C-terminal domain) with TJP1; required for the apical cell-cell junction localization of DNMBP. In terms of assembly, (Microbial infection) Interacts (via SH3 domain 6) with L.monocytogenes InlC. As to expression, detected in heart, brain, lung, liver, skeletal muscle, kidney and pancreas.

It is found in the cytoplasm. It localises to the golgi apparatus. The protein resides in the golgi stack. Its subcellular location is the cytoskeleton. The protein localises to the synapse. It is found in the cell junction. Functionally, plays a critical role as a guanine nucleotide exchange factor (GEF) for CDC42 in several intracellular processes associated with the actin and microtubule cytoskeleton. Regulates the structure of apical junctions through F-actin organization in epithelial cells. Participates in the normal lumenogenesis of epithelial cell cysts by regulating spindle orientation. Plays a role in ciliogenesis. May play a role in membrane trafficking between the cell surface and the Golgi. This chain is Dynamin-binding protein, found in Homo sapiens (Human).